Here is a 79-residue protein sequence, read N- to C-terminus: Small ribosomal subunit protein bS20 (79 aa).

It belongs to the bacterial ribosomal protein bS20 family.

In terms of biological role, binds directly to 16S ribosomal RNA. The polypeptide is Small ribosomal subunit protein bS20 (Karelsulcia muelleri (strain GWSS) (Sulcia muelleri)).